The chain runs to 301 residues: Glycine--tRNA ligase alpha subunit (301 aa).

It belongs to the class-II aminoacyl-tRNA synthetase family. In terms of assembly, tetramer of two alpha and two beta subunits.

It is found in the cytoplasm. The catalysed reaction is tRNA(Gly) + glycine + ATP = glycyl-tRNA(Gly) + AMP + diphosphate. The sequence is that of Glycine--tRNA ligase alpha subunit from Pseudoalteromonas atlantica (strain T6c / ATCC BAA-1087).